A 369-amino-acid chain; its full sequence is Peptide chain release factor 2 (369 aa).

At glutamine 251 the chain carries N5-methylglutamine.

The protein belongs to the prokaryotic/mitochondrial release factor family. Post-translationally, methylated by PrmC. Methylation increases the termination efficiency of RF2.

The protein localises to the cytoplasm. In terms of biological role, peptide chain release factor 2 directs the termination of translation in response to the peptide chain termination codons UGA and UAA. The polypeptide is Peptide chain release factor 2 (prfB) (Chlamydia muridarum (strain MoPn / Nigg)).